The sequence spans 487 residues: Glutamyl-tRNA(Gln) amidotransferase subunit A (487 aa).

Catalysis depends on charge relay system residues Lys-79 and Ser-154. Ser-178 serves as the catalytic Acyl-ester intermediate.

This sequence belongs to the amidase family. GatA subfamily. In terms of assembly, heterotrimer of A, B and C subunits.

The catalysed reaction is L-glutamyl-tRNA(Gln) + L-glutamine + ATP + H2O = L-glutaminyl-tRNA(Gln) + L-glutamate + ADP + phosphate + H(+). Functionally, allows the formation of correctly charged Gln-tRNA(Gln) through the transamidation of misacylated Glu-tRNA(Gln) in organisms which lack glutaminyl-tRNA synthetase. The reaction takes place in the presence of glutamine and ATP through an activated gamma-phospho-Glu-tRNA(Gln). This Roseiflexus sp. (strain RS-1) protein is Glutamyl-tRNA(Gln) amidotransferase subunit A.